The primary structure comprises 507 residues: MATIRADEISNIIRERIEQYNREVKIVNTGTVLQVGDGIARIYGLDEVMAGELVEFEEGTIGIALNLESKNVGVVLMGDGLLIQEGSSVKATGRIAQIPVSEAYLGRVINALAKPIDGRGEISSSESRLIESPAPGIISRRSVYEPLQTGLIAIDAMIPIGRGQRELIIGDRQTGKTAVATDTILNQQGNNVICVYVAIGQKASSVAQVVNALQERGAMEYTIVVAEAADSPATLQYLAPYTGAALAEYFMYRERHTLIIYDDPSKQAQAYRQMSLLLRRPPGREAYPGDVFYLHSRLLERAAKLSSRLGEGSMTALPIVETQSGDVSAYIPTNVISITDGQIFLSADLFNAGIRPAINVGISVSRVGSAAQIKAMKQVAGKLKLELAQFAELEAFAQFSSDLDKATQNQLARGQRLRELLKQSQAKPLTVAEQILTIYTGTNGYLDSFEIAQVRKFLDELRDYVKTRKPQFEEIISSTKIFTEEAQALLKDAIQEQKELFLVQEKV.

170–177 (GDRQTGKT) lines the ATP pocket.

This sequence belongs to the ATPase alpha/beta chains family. As to quaternary structure, F-type ATPases have 2 components, CF(1) - the catalytic core - and CF(0) - the membrane proton channel. CF(1) has five subunits: alpha(3), beta(3), gamma(1), delta(1), epsilon(1). CF(0) has four main subunits: a, b, b' and c.

Its subcellular location is the plastid. It is found in the chloroplast thylakoid membrane. It carries out the reaction ATP + H2O + 4 H(+)(in) = ADP + phosphate + 5 H(+)(out). Its function is as follows. Produces ATP from ADP in the presence of a proton gradient across the membrane. The alpha chain is a regulatory subunit. The protein is ATP synthase subunit alpha, chloroplastic of Oenothera glazioviana (Large-flowered evening primrose).